The chain runs to 422 residues: Immunoglobulin mu Fc receptor (422 aa).

A signal peptide spans 1-16; the sequence is MDFWLWLLYFLPVSGA. Residues 18–262 lie on the Extracellular side of the membrane; the sequence is RVLPEVQLNV…DRGLHIPIPE (245 aa). In terms of domain architecture, Ig-like spans 24–121; that stretch reads QLNVEWGGSI…GKTQKITLNV (98 aa). 2 disulfides stabilise this stretch: C37-C103 and C49-C58. T91 carries the post-translational modification Phosphothreonine. A helical transmembrane segment spans residues 263 to 283; the sequence is FHILIPTFLGFLLLVLLGLVV. Residues 284–422 are Cytoplasmic-facing; it reads KRAIQRRRAS…YAPGPRSSCP (139 aa). The segment covering 290-308 has biased composition (basic residues); that stretch reads RRASSRRAGRLAMRRRGRG. 2 disordered regions span residues 290-367 and 391-422; these read RRAS…QVLE and VNLE…SSCP. The segment covering 344 to 363 has biased composition (low complexity); the sequence is LGPAEAPLLNAPASASPASP.

As to quaternary structure, interacts (via Ig-like domain) with IGHM (via CH4/Cmu4 domain), both secreted and membrane-bound IgM; the interaction is glycan-independent and multivalent theoretically involving up to eight binding sites for the IgM pentamer. Phosphorylated on both Tyr and Ser residues. Post-translationally, O-glycosylated. Sialylated. O-linked glycans regulate trafficking to the plasma membrane. As to expression, expressed in pre-B cells, immature and mature B cells residing in primary and secondary lymphoid organs (at protein level). In the spleen, highly expressed in follicular and marginal zone B cells and at lower levels in germinal center B cells and plasma cells. Expressed in splenic dendritic cells and in granulocytes. In the peritoneum, expressed in B1-a and B-2 cell lineages. In the bone marrow, expressed in immature B cells and at a lower level in pro- and pre-B cells (at protein level). Expressed in M cells (at protein level).

It localises to the cell membrane. It is found in the early endosome membrane. The protein resides in the golgi apparatus. The protein localises to the trans-Golgi network membrane. Its subcellular location is the lysosome membrane. Functionally, high-affinity Fc receptor for immunoglobulin M (IgM), both secreted and membrane-bound IgM. Primarily regulates IgM transport and homeostasis. In lymphoid cells, enables exocytosis of membrane-bound IgM on the plasma membrane as well as endocytosis of IgM-antigen complexes toward lysosomes for degradation. In mucosal epithelium, mediates retrotranscytosis of antigen-IgM complexes across mucosal M cells toward antigen-presenting cells in mucosal lymphoid tissues. Triggers costimulatory signaling and mediates most of IgM effector functions involved in B cell development and primary immune response to infection. Likely limits tonic IgM BCR signaling to self-antigens for proper negative selection of autoreactive B cells in the bone marrow and for the maintenance of regulatory B cell pool in peripheral lymphoid organs. Mediates antibody responses to T cell-dependent and T cell-independent antigens and promotes induction of an efficient neutralizing IgG response. Engages in cross-talk with antigen-receptor signaling via the non-canonical NF-kappa-B, MAP kinases and calcium signaling pathways. The protein is Immunoglobulin mu Fc receptor of Mus musculus (Mouse).